A 70-amino-acid polypeptide reads, in one-letter code: Protein SlyX homolog (70 aa).

The protein belongs to the SlyX family.

This Shewanella frigidimarina (strain NCIMB 400) protein is Protein SlyX homolog.